Reading from the N-terminus, the 77-residue chain is UPF0349 protein lwe2340 (77 aa).

Belongs to the UPF0349 family.

This chain is UPF0349 protein lwe2340, found in Listeria welshimeri serovar 6b (strain ATCC 35897 / DSM 20650 / CCUG 15529 / CIP 8149 / NCTC 11857 / SLCC 5334 / V8).